Here is a 391-residue protein sequence, read N- to C-terminus: MTWLKQMWSSILVLAVVVIGARAVPITYLESAVAKGAVCLDGSAPAYHFDKGSGSGVNNWIVHMEGGGWCTDIATCVQRKSTMKGSSKLMNKDFGFSGILGGKQSTNPDFYNWNRIKVRYCDGSSFTGDIEAVDPTHKLFFRGARVWRAVIDDLMAKGMSNAQNAILSGCSAGALAAILHCDQFKSTLPKTAKVKCVSDAGYFIHGKDITGGSYIQSYYAKVVATHGSAKSLPASCTSSMKPDLCFFPQYVAKTLQTPLFVINAAFDSWQIKNVLAPTSVDKSKAWKTCKLDLKKCTAAQLQTVQGYRDQVLAALAPVRSATTNGLFLDSCHAHCQGGSAATWSGDKGPTVANTKMAKAVGDWFFERSTFQNVDCSSLNCNPTCPAVSTED.

The first 23 residues, 1–23, serve as a signal peptide directing secretion; it reads MTWLKQMWSSILVLAVVVIGARA. Residues S171, D267, and H334 each act as charge relay system in the active site.

The protein belongs to the pectinacetylesterase family.

The protein localises to the secreted. The protein resides in the cell wall. Its function is as follows. Hydrolyzes acetyl esters in homogalacturonan regions of pectin. In type I primary cell wall, galacturonic acid residues of pectin can be acetylated at the O-2 and O-3 positions. Decreasing the degree of acetylation of pectin gels in vitro alters their physical properties. The chain is Pectin acetylesterase 11 from Arabidopsis thaliana (Mouse-ear cress).